A 367-amino-acid polypeptide reads, in one-letter code: Heme A synthase (367 aa).

The next 5 membrane-spanning stretches (helical) occupy residues 25–45, 111–131, 139–159, 174–194, and 210–230; these read ALRL…LVGG, LIAR…WLTG, WPLV…WWMV, LATH…IMRG, and GFAA…ALVA. H274 contacts heme. Transmembrane regions (helical) follow at residues 276–296, 305–325, and 327–347; these read IGAY…LRAA, AVVL…TLLM, and VPLH…GFAV. H335 is a heme binding site.

Belongs to the COX15/CtaA family. Type 2 subfamily. As to quaternary structure, interacts with CtaB. It depends on heme b as a cofactor.

It localises to the cell membrane. The catalysed reaction is Fe(II)-heme o + 2 A + H2O = Fe(II)-heme a + 2 AH2. The protein operates within porphyrin-containing compound metabolism; heme A biosynthesis; heme A from heme O: step 1/1. In terms of biological role, catalyzes the conversion of heme O to heme A by two successive hydroxylations of the methyl group at C8. The first hydroxylation forms heme I, the second hydroxylation results in an unstable dihydroxymethyl group, which spontaneously dehydrates, resulting in the formyl group of heme A. The chain is Heme A synthase from Rhizobium etli (strain CIAT 652).